Here is a 144-residue protein sequence, read N- to C-terminus: Large ribosomal subunit protein uL15 (144 aa).

The segment at 1–51 (MQLNTLSPAQGEKKSRKRVGRGIGSGIGKTCGSGHKGQKSRSGGFNKIGFE) is disordered. Residues 21 to 35 (RGIGSGIGKTCGSGH) show a composition bias toward gly residues.

Belongs to the universal ribosomal protein uL15 family. Part of the 50S ribosomal subunit.

Binds to the 23S rRNA. This chain is Large ribosomal subunit protein uL15, found in Vesicomyosocius okutanii subsp. Calyptogena okutanii (strain HA).